A 500-amino-acid polypeptide reads, in one-letter code: Potassium/proton antiporter CemA (500 aa).

A helical transmembrane segment spans residues 129–149; it reads LFLTTIKTIFILFFVPFLVNF. An insert region spans residues 204–354; that stretch reads HQTHRDSKPL…GSLDSIKNKD (151 aa). The next 3 helical transmembrane spans lie at 378–398, 425–445, and 461–481; these read ITNF…LITL, ILLI…ELFF, and IFLL…YLIF.

The protein belongs to the CemA family.

It localises to the plastid. Its subcellular location is the chloroplast inner membrane. The enzyme catalyses K(+)(in) + H(+)(out) = K(+)(out) + H(+)(in). Functionally, contributes to K(+)/H(+) antiport activity by supporting proton efflux to control proton extrusion and homeostasis in chloroplasts in a light-dependent manner to modulate photosynthesis. Prevents excessive induction of non-photochemical quenching (NPQ) under continuous-light conditions. Indirectly promotes efficient inorganic carbon uptake into chloroplasts. The protein is Potassium/proton antiporter CemA of Chlamydomonas reinhardtii (Chlamydomonas smithii).